Consider the following 72-residue polypeptide: Prokaryotic ubiquitin-like protein Pup (72 aa).

Gly residues predominate over residues 1-10; the sequence is MATKDTGGGQ. The segment at 1–45 is disordered; sequence MATKDTGGGQQKATRNTEEVEEQAQDAQASEDLKERQEKLSDDVD. Residues 9 to 60 are a coiled coil; the sequence is GQQKATRNTEEVEEQAQDAQASEDLKERQEKLSDDVDSVLDEIDDVLEENAE. The segment at 28–66 is ARC ATPase binding; the sequence is QASEDLKERQEKLSDDVDSVLDEIDDVLEENAEDFVRSF. Residues 31–42 are compositionally biased toward basic and acidic residues; it reads EDLKERQEKLSD. Glu72 is covalently cross-linked (Isoglutamyl lysine isopeptide (Glu-Lys) (interchain with K-? in acceptor proteins)).

It belongs to the prokaryotic ubiquitin-like protein family. As to quaternary structure, strongly interacts with the proteasome-associated ATPase ARC through a hydrophobic interface; the interacting region of Pup lies in its C-terminal half. There is one Pup binding site per ARC hexamer ring.

The protein operates within protein degradation; proteasomal Pup-dependent pathway. Functionally, protein modifier that is covalently attached to lysine residues of substrate proteins, thereby targeting them for proteasomal degradation. The tagging system is termed pupylation. In Streptomyces avermitilis (strain ATCC 31267 / DSM 46492 / JCM 5070 / NBRC 14893 / NCIMB 12804 / NRRL 8165 / MA-4680), this protein is Prokaryotic ubiquitin-like protein Pup.